Here is a 342-residue protein sequence, read N- to C-terminus: Farnesyl pyrophosphate synthase 2 (342 aa).

Lysine 47, arginine 50, and glutamine 86 together coordinate isopentenyl diphosphate. Mg(2+)-binding residues include aspartate 93 and aspartate 97. Residue arginine 102 participates in dimethylallyl diphosphate binding. Arginine 103 is a binding site for isopentenyl diphosphate. Dimethylallyl diphosphate contacts are provided by lysine 190, threonine 191, glutamine 229, lysine 246, and lysine 255.

It belongs to the FPP/GGPP synthase family. It depends on Mg(2+) as a cofactor.

It is found in the cytoplasm. It catalyses the reaction isopentenyl diphosphate + dimethylallyl diphosphate = (2E)-geranyl diphosphate + diphosphate. The enzyme catalyses isopentenyl diphosphate + (2E)-geranyl diphosphate = (2E,6E)-farnesyl diphosphate + diphosphate. It participates in isoprenoid biosynthesis; farnesyl diphosphate biosynthesis; farnesyl diphosphate from geranyl diphosphate and isopentenyl diphosphate: step 1/1. The protein operates within isoprenoid biosynthesis; geranyl diphosphate biosynthesis; geranyl diphosphate from dimethylallyl diphosphate and isopentenyl diphosphate: step 1/1. Catalyzes the sequential condensation of isopentenyl pyrophosphate with the allylic pyrophosphates, dimethylallyl pyrophosphate, and then with the resultant geranylpyrophosphate to the ultimate product farnesyl pyrophosphate. The sequence is that of Farnesyl pyrophosphate synthase 2 (FPS2) from Lupinus albus (White lupine).